The chain runs to 274 residues: Undecaprenyl-diphosphatase (274 aa).

Helical transmembrane passes span Ala-44–Trp-64, Leu-85–Ile-105, Leu-109–Ala-129, Ala-185–Leu-205, Ala-215–Val-235, and Phe-250–Val-270.

The protein belongs to the UppP family.

It is found in the cell inner membrane. It catalyses the reaction di-trans,octa-cis-undecaprenyl diphosphate + H2O = di-trans,octa-cis-undecaprenyl phosphate + phosphate + H(+). Catalyzes the dephosphorylation of undecaprenyl diphosphate (UPP). Confers resistance to bacitracin. The polypeptide is Undecaprenyl-diphosphatase (Acidovorax ebreus (strain TPSY) (Diaphorobacter sp. (strain TPSY))).